A 193-amino-acid polypeptide reads, in one-letter code: AP-3 complex subunit sigma-2 (193 aa).

This sequence belongs to the adaptor complexes small subunit family. Adaptor protein complex 3 (AP-3) is a heterotetramer composed of two large adaptins (delta-type subunit AP3D1 and beta-type subunit AP3B1 or AP3B2), a medium adaptin (mu-type subunit AP3M1 or AP3M2) and a small adaptin (sigma-type subunit APS1 or AP3S2). Interacts with AGAP1. AP-3 associates with the BLOC-1 complex. As to expression, present in all adult tissues examined.

Its subcellular location is the golgi apparatus. The protein resides in the cytoplasmic vesicle membrane. In terms of biological role, part of the AP-3 complex, an adaptor-related complex which is not clathrin-associated. The complex is associated with the Golgi region as well as more peripheral structures. It facilitates the budding of vesicles from the Golgi membrane and may be directly involved in trafficking to lysosomes. In concert with the BLOC-1 complex, AP-3 is required to target cargos into vesicles assembled at cell bodies for delivery into neurites and nerve terminals. The sequence is that of AP-3 complex subunit sigma-2 (AP3S2) from Homo sapiens (Human).